The sequence spans 649 residues: Leucine-rich repeat transmembrane protein FLRT3 (649 aa).

Residues 1 to 28 (MISPAWSIFLIGTKIGLFLQVAPLSVMA) form the signal peptide. One can recognise an LRRNT domain in the interval 29-58 (KSCPSVCRCDAGFIYCNDRFLTSIPTGIPE). Over 29–528 (KSCPSVCRCD…KEPYKNPNLP (500 aa)) the chain is Extracellular. 2 disulfides stabilise this stretch: Cys-31/Cys-37 and Cys-35/Cys-44. Positions 38–67 (DAGFIYCNDRFLTSIPTGIPEDATTLYLQN) are interaction with ADGRL3. LRR repeat units follow at residues 59–80 (DATT…SDLK), 84–104 (KVER…NLPK), 105–126 (YVKE…SLSK), 129–150 (YLEE…EGAF), 155–176 (YLRL…LPRT), 177–197 (IEEL…SLQG), 200–220 (SLKR…GDKV), 226–247 (NLTE…LPGT), 248–269 (NLRK…AFSY), and 272–293 (QLYR…IFDD). A glycan (N-linked (GlcNAc...) asparagine) is linked at Asn-226. N-linked (GlcNAc...) asparagine glycans are attached at residues Asn-282 and Asn-296. The LRRCT domain occupies 305 to 357 (NPWYCGCKMKWVRDWLQSLPVKVNVRGLMCQAPEKVRGMAIKDLNAELFDCKD). The cysteines at positions 309 and 334 are disulfide-linked. The tract at residues 385–407 (VTKQPDIKNPKLTKDHQTTGSPS) is disordered. A compositionally biased stretch (basic and acidic residues) spans 389–401 (PDIKNPKLTKDHQ). The region spanning 409 to 504 (KTITITVKSV…VCIETETAPL (96 aa)) is the Fibronectin type-III domain. A helical transmembrane segment spans residues 529–549 (LAAIIGGAVALVTIALLALVC). At 550 to 649 (WYVHRNGSLF…GIPDSDHSHS (100 aa)) the chain is on the cytoplasmic side. The segment at 622 to 649 (LYKNNHSESSSNRSYRDSGIPDSDHSHS) is disordered.

As to quaternary structure, monomer and homodimer. Self-associates (via leucine-rich repeats), giving rise to homooligomers. Interacts with FGFR1. Interacts (via extracellular domain) with ADGRL1/LPHN1 and LPHN2 (via olfactomedin-like domain). Interacts (via extracellular domain) with ADGRL3 (via olfactomedin-like domain); the interaction is direct. Interacts (via extracellular domain) with UNC5B and UNC5D (via extracellular domain); the interaction is direct. Identified in complexes composed of FLRT3, ADGRL3 and UNC5B, respectively FLRT3, ADGRL3 and UNC5D. May also interact (via extracellular domain) with UNC5A and UNC5C. Interacts (via cytoplasmic domain) with ROBO1. Post-translationally, N-glycosylated. In terms of processing, proteolytic cleavage in the juxtamembrane region gives rise to a soluble ectodomain. Cleavage is probably effected by a metalloprotease.

The protein localises to the cell membrane. It is found in the presynaptic cell membrane. Its subcellular location is the endoplasmic reticulum membrane. It localises to the cell junction. The protein resides in the focal adhesion. The protein localises to the secreted. It is found in the cell projection. Its subcellular location is the axon. It localises to the growth cone membrane. Functions in cell-cell adhesion, cell migration and axon guidance, exerting an attractive or repulsive role depending on its interaction partners. Plays a role in the spatial organization of brain neurons. Plays a role in vascular development in the retina. Plays a role in cell-cell adhesion via its interaction with ADGRL3 and probably also other latrophilins that are expressed at the surface of adjacent cells. Interaction with the intracellular domain of ROBO1 mediates axon attraction towards cells expressing NTN1. Mediates axon growth cone collapse and plays a repulsive role in neuron guidance via its interaction with UNC5B, and possibly also other UNC-5 family members. Promotes neurite outgrowth (in vitro). Mediates cell-cell contacts that promote an increase both in neurite number and in neurite length. Plays a role in the regulation of the density of glutamaergic synapses. Plays a role in fibroblast growth factor-mediated signaling cascades. Required for normal morphogenesis during embryonic development, but not for normal embryonic patterning. Required for normal ventral closure, headfold fusion and definitive endoderm migration during embryonic development. Required for the formation of a normal basement membrane and the maintenance of a normal anterior visceral endoderm during embryonic development. In Pongo abelii (Sumatran orangutan), this protein is Leucine-rich repeat transmembrane protein FLRT3 (FLRT3).